We begin with the raw amino-acid sequence, 1144 residues long: Nitric oxide synthase, inducible (1144 aa).

The DINNN-motif; mediates interaction with SPSB1, SPSB2 and SPSB4 motif lies at 23–27; sequence DINNN. Positions 37–59 are disordered; that stretch reads SPTIQDDPKSHQNGSPQLLTGTA. The span at 47 to 59 shows a compositional bias: polar residues; sequence HQNGSPQLLTGTA. Residues Cys-104 and Cys-109 each coordinate Zn(2+). Residue Ser-112 coordinates (6R)-L-erythro-5,6,7,8-tetrahydrobiopterin. Position 194 (Cys-194) interacts with heme b. L-arginine contacts are provided by Gln-257, Trp-366, Tyr-367, and Glu-371. (6R)-L-erythro-5,6,7,8-tetrahydrobiopterin contacts are provided by Arg-375, Ile-456, Trp-457, and Phe-470. Tyr-485 contacts heme b. Positions 509-529 are calmodulin-binding; sequence FRVLVKVVFFASMLMRKVMAS. In terms of domain architecture, Flavodoxin-like spans 533–671; that stretch reads ATVLFATETG…AFRSWAVQTF (139 aa). FMN is bound by residues Thr-539, Glu-540, Thr-541, Lys-543, and Ser-544. Tyr-569 is modified (phosphotyrosine). Residues Ser-585, Thr-586, Ser-622, Cys-629, Glu-655, and Gln-659 each coordinate FMN. The FAD-binding FR-type domain maps to 724–964; it reads KNVFTMRLKS…VRSVSGFQLP (241 aa). Residue Arg-744 coordinates NADP(+). 6 residues coordinate FAD: His-766, Arg-900, Tyr-902, Ser-903, Thr-918, and Ala-920. Thr-923 contacts NADP(+). Tyr-924, Val-937, Cys-938, and Ser-939 together coordinate FAD. Thr-978, Arg-1011, Ser-1040, Arg-1041, Lys-1047, Tyr-1049, Gln-1051, and Asp-1084 together coordinate NADP(+).

It belongs to the NOS family. In terms of assembly, homodimer. Interacts with NHERF1. Interacts with GAPDH. Interacts with S100A8 and S100A9 to form the iNOS-S100A8/9 transnitrosylase complex. Interacts with SPSB1, SPSB2 and SPSB4. Interacts with ELOC and CUL5 in the presence of SPSB1 or SPSB2 or SPSB4. Forms a complex with ASL, ASS1 and HSP90AA1; the complex regulates cell-autonomous L-arginine synthesis and citrulline recycling while channeling extracellular L-arginine to nitric oxide synthesis pathway. The cofactor is heme b. FAD serves as cofactor. Requires FMN as cofactor. It depends on (6R)-L-erythro-5,6,7,8-tetrahydrobiopterin as a cofactor. In terms of processing, polyubiquitinated; mediated by SPSB1, SPSB2 and SPSB4, leading to proteasomal degradation. In terms of tissue distribution, macrophages.

It localises to the cytoplasm. It is found in the cytosol. The catalysed reaction is 2 L-arginine + 3 NADPH + 4 O2 + H(+) = 2 L-citrulline + 2 nitric oxide + 3 NADP(+) + 4 H2O. Its activity is regulated as follows. Not stimulated by calcium/calmodulin. Aspirin inhibits expression and function of this enzyme and effects may be exerted at the level of translational/post-translational modification and directly on the catalytic activity. Functionally, produces nitric oxide (NO) which is a messenger molecule with diverse functions throughout the body. In macrophages, NO mediates tumoricidal and bactericidal actions. Also has nitrosylase activity and mediates cysteine S-nitrosylation of cytoplasmic target proteins such PTGS2/COX2. As component of the iNOS-S100A8/9 transnitrosylase complex involved in the selective inflammatory stimulus-dependent S-nitrosylation of GAPDH implicated in regulation of the GAIT complex activity and probably multiple targets including ANXA5, EZR, MSN and VIM. Involved in inflammation, enhances the synthesis of pro-inflammatory mediators such as IL6 and IL8. The chain is Nitric oxide synthase, inducible (Nos2) from Mus musculus (Mouse).